We begin with the raw amino-acid sequence, 362 residues long: Probable dual-specificity RNA methyltransferase RlmN (362 aa).

The active-site Proton acceptor is the Glu91. The Radical SAM core domain maps to 97–329 (QHYGLSVCVT…KKNGVNCVVR (233 aa)). Cysteines 104 and 340 form a disulfide. Residues Cys111, Cys115, and Cys118 each coordinate [4Fe-4S] cluster. S-adenosyl-L-methionine-binding positions include 163 to 164 (GE), Ser195, 218 to 220 (SLH), and Asn296. Cys340 (S-methylcysteine intermediate) is an active-site residue.

Belongs to the radical SAM superfamily. RlmN family. [4Fe-4S] cluster is required as a cofactor.

Its subcellular location is the cytoplasm. It carries out the reaction adenosine(2503) in 23S rRNA + 2 reduced [2Fe-2S]-[ferredoxin] + 2 S-adenosyl-L-methionine = 2-methyladenosine(2503) in 23S rRNA + 5'-deoxyadenosine + L-methionine + 2 oxidized [2Fe-2S]-[ferredoxin] + S-adenosyl-L-homocysteine. The catalysed reaction is adenosine(37) in tRNA + 2 reduced [2Fe-2S]-[ferredoxin] + 2 S-adenosyl-L-methionine = 2-methyladenosine(37) in tRNA + 5'-deoxyadenosine + L-methionine + 2 oxidized [2Fe-2S]-[ferredoxin] + S-adenosyl-L-homocysteine. Specifically methylates position 2 of adenine 2503 in 23S rRNA and position 2 of adenine 37 in tRNAs. In Streptococcus gordonii (strain Challis / ATCC 35105 / BCRC 15272 / CH1 / DL1 / V288), this protein is Probable dual-specificity RNA methyltransferase RlmN.